A 194-amino-acid chain; its full sequence is Fibroblast growth factor 7 (194 aa).

The first 31 residues, 1–31 (MRKWILTRILPTPLYRPCFHLVCLVGTISLA), serve as a signal peptide directing secretion. N-linked (GlcNAc...) asparagine glycosylation is found at asparagine 45 and asparagine 149.

Belongs to the heparin-binding growth factors family. As to quaternary structure, interacts with FGFBP1. Interacts with FGFR2. Affinity between fibroblast growth factors (FGFs) and their receptors is increased by heparan sulfate glycosaminoglycans that function as coreceptors.

Its function is as follows. Growth factor active on keratinocytes. Possible major paracrine effector of normal epithelial cell proliferation. This is Fibroblast growth factor 7 (Fgf7) from Rattus norvegicus (Rat).